The following is a 302-amino-acid chain: Recombination-associated protein RdgC (302 aa).

It belongs to the RdgC family.

It localises to the cytoplasm. Its subcellular location is the nucleoid. May be involved in recombination. The polypeptide is Recombination-associated protein RdgC (Mannheimia succiniciproducens (strain KCTC 0769BP / MBEL55E)).